A 367-amino-acid chain; its full sequence is Splicing factor U2AF-associated protein 2 (367 aa).

The disordered stretch occupies residues 36-104 (YDPNSLKMNK…SKSENSEASP (69 aa)). The span at 61 to 78 (TEGKESSNGEDRHTKRLY) shows a compositional bias: basic and acidic residues. 2 RRM domains span residues 112 to 193 (VYIQ…KMRV) and 268 to 329 (LLID…VVEA).

This sequence belongs to the HTATSF1 family. As to quaternary structure, interacts with the U2AF large and U2AF small subunits.

Has a role in pre-mRNA splicing. The sequence is that of Splicing factor U2AF-associated protein 2 (uap2) from Schizosaccharomyces pombe (strain 972 / ATCC 24843) (Fission yeast).